The chain runs to 114 residues: U17-barytoxin-Tl1a (114 aa).

A signal peptide spans 1-20; the sequence is MKTIIVFLSLLVLATKFGDA. The propeptide occupies 21-74; sequence NEGVNQEQMKEVIQNEFREDFLNEMAPMSLLQQLEAIESTLLEKEADRNSRQKR. 3 disulfide bridges follow: cysteine 75–cysteine 88, cysteine 82–cysteine 93, and cysteine 87–cysteine 108.

Belongs to the neurotoxin 14 (magi-1) family. 03 (ICK-30-40) subfamily. In terms of tissue distribution, expressed by the venom gland.

It localises to the secreted. Functionally, ion channel inhibitor. This is U17-barytoxin-Tl1a from Trittame loki (Brush-footed trapdoor spider).